We begin with the raw amino-acid sequence, 1365 residues long: ATP-dependent RNA helicase DHX29 (1365 aa).

Positions 1–10 are enriched in basic residues; the sequence is MGGKNKKHKA. Disordered regions lie at residues 1-74, 174-222, and 235-257; these read MGGK…NDSG, SQEF…EETT, and AEQQ…EKFD. 2 stretches are compositionally biased toward low complexity: residues 11–36 and 43–53; these read PGAA…VGEA and ARPAPAVPTGA. 3 positions are modified to phosphoserine: Ser69, Ser190, and Ser198. Residues 187–203 are compositionally biased toward polar residues; it reads KFQSVQIQATLSPPQQT. Residues 206–222 show a composition bias toward basic and acidic residues; it reads KRQEEDPKIKPKKEETT. The stretch at 281–308 forms a coiled coil; it reads LEKNKQGQKEAQEKIRKFQREMETLEDH. The disordered stretch occupies residues 500 to 524; sequence QQQQQQQQRPESEKGGSEDPEESWE. One can recognise a Helicase ATP-binding domain in the interval 581 to 754; that stretch reads VETLKRHRVV…FTHCPILRIS (174 aa). Position 594–601 (594–601) interacts with ATP; it reads GETGSGKS. The short motif at 701–704 is the DEAH box element; that stretch reads DEVH. Residues 848-1025 enclose the Helicase C-terminal domain; it reads LILELLVYLD…ELCLHIMKCD (178 aa).

Belongs to the DEAD box helicase family. DEAH subfamily. In terms of assembly, part of the 43S pre-initiation complex (PIC) that contains at least Met-tRNA, EIF1, EIF1A (EIF1AX or EIF1AY), EIF2S1, EIF2S2, EIF2S3, EIF3A, EIF3B, EIF3C, EIF3D, EIF3E, EIF3F, EIF3G, EIF3H, EIF3I, EIF3J, EIF3K, EIF3L, EIF3M, DHX29 and the 40S ribosomal subunit.

It is found in the cytoplasm. The catalysed reaction is ATP + H2O = ADP + phosphate + H(+). Its function is as follows. ATP-binding RNA helicase involved in translation initiation. Part of the 43S pre-initiation complex that is required for efficient initiation on mRNAs of higher eukaryotes with structured 5'-UTRs by promoting efficient NTPase-dependent 48S complex formation. Specifically binds to the 40S ribosome near the mRNA entrance. Does not possess a processive helicase activity. This Mus musculus (Mouse) protein is ATP-dependent RNA helicase DHX29.